A 66-amino-acid polypeptide reads, in one-letter code: Large ribosomal subunit protein bL35 (66 aa).

The protein belongs to the bacterial ribosomal protein bL35 family.

This is Large ribosomal subunit protein bL35 from Lysinibacillus sphaericus (strain C3-41).